The primary structure comprises 215 residues: 25 kDa ookinete surface antigen (215 aa).

An N-terminal signal peptide occupies residues 1 to 16; that stretch reads MNMSYLFFFFFIQLVL. Residues 29 to 58 enclose the EGF-like 1; truncated domain; that stretch reads CKDGFLIQMSNHFECNCNPGFVLTSESTCE. 3 EGF-like domains span residues 59 to 104, 104 to 148, and 151 to 191; these read NKVE…SICV, VPNE…NTCT, and GQTE…NACI. Disulfide bonds link Cys-63-Cys-78, Cys-72-Cys-90, Cys-92-Cys-103, Cys-108-Cys-118, Cys-113-Cys-131, Cys-133-Cys-147, Cys-155-Cys-166, Cys-159-Cys-175, and Cys-177-Cys-190. N-linked (GlcNAc...) asparagine glycans are attached at residues Asn-144 and Asn-163. The GPI-anchor amidated serine moiety is linked to residue Ser-192. Residues 193 to 215 constitute a propeptide, removed in mature form; it reads FSLFNILNLSIIFIISLIYFYII. The N-linked (GlcNAc...) asparagine glycan is linked to Asn-200.

It is found in the cell membrane. This chain is 25 kDa ookinete surface antigen, found in Plasmodium gallinaceum.